The sequence spans 581 residues: Intermediate filament protein ifa-3 (581 aa).

Residues 1 to 33 form a disordered region; that stretch reads MADPDSYRSSITSRPAFNRTVTSSTQNYGTPAS. Positions 1–74 are head; that stretch reads MADPDSYRSS…RDDREREKKE (74 aa). Residues 7–33 are compositionally biased toward polar residues; it reads YRSSITSRPAFNRTVTSSTQNYGTPAS. One can recognise an IF rod domain in the interval 71–424; sequence EKKEITELND…RMLEGNSEEN (354 aa). Positions 75-106 are coil 1A; sequence ITELNDRLASYIGKVRFLAAQNRKLEADLNVL. Residues 107–120 are linker 1; the sequence is QSRFGKSTGSVKIM. The interval 121 to 258 is coil 1B; that stretch reads YEMEITTATN…RGFETELKDL (138 aa). A linker 12 region spans residues 259–276; sequence QAQAARDTTSENREYFKN. A coil 2 region spans residues 277–424; the sequence is ELMNSIRDIR…RMLEGNSEEN (148 aa). Residues 425–578 form a tail region; it reads GLRQLVEKVV…THMQRQSQQT (154 aa). The 118-residue stretch at 457–574 folds into the LTD domain; it reads SRTSYQRSAK…EERATHMQRQ (118 aa).

This sequence belongs to the intermediate filament family. Forms some heteromeric filaments with ifb-1. In terms of tissue distribution, expressed in the embryonic and larval hypodermis. Also expressed in the ventral nerve cord of larvae.

The protein resides in the cytoplasm. Its function is as follows. Cytoplasmic intermediate filaments provide mechanical strength to cells. Essential protein, involved in attachment structures in epidermal cells that connect muscles to the external cuticle. Required for epidermal morphogenesis in embryos. Probable component of embryonic epidermal attachment structures. The chain is Intermediate filament protein ifa-3 (ifa-3) from Caenorhabditis elegans.